We begin with the raw amino-acid sequence, 500 residues long: Cytochrome P450 71B37 (500 aa).

A helical membrane pass occupies residues 2 to 22 (ATIWFLPLLFLSCLLLAALRL). Residue Cys-440 coordinates heme.

Belongs to the cytochrome P450 family. Heme is required as a cofactor.

It is found in the membrane. This chain is Cytochrome P450 71B37 (CYP71B37), found in Arabidopsis thaliana (Mouse-ear cress).